The primary structure comprises 419 residues: MSGYPGYNNGGYGAPNQQYPPQPYYPPQPAYGAPPPQGGGYGYHQPPPPQQPYGYSQPPPQQYGGYNGVPPNAPQYGRPGMPSVNSNAYTNGNQNAPPPPPQGMHAFGQGAPQGYAFQYSNCTGKRKALLIGINYFGQRGQLRGCINDVKNMSSYLHENFGYQRDDMVLLTDDQQNPMSQPTKQNILRAMHWLVKDARPNDSLFFHYSGHGGQTKDLDGDEEDGYDEVIYPVDFRQVGHIVDDEMHRIMVQPLQPGVRLTAIFDSCHSGTALDLPYVYSTQGVLKEPNLAKEAGQGLLGVISSYSQGDMSGVASNLMGFFKKATTGDDAYNKTLATKTSPADVIMWSGSKDDQTSADATIAAQATGAMSWAFITAMKKNPQQSYVQLLNSIRDELATKYTQKPQLSCSHPLNTNLLFVM.

The disordered stretch occupies residues 1 to 109 (MSGYPGYNNG…PPQGMHAFGQ (109 aa)). Composition is skewed to pro residues over residues 18 to 37 (QYPP…PPPQ) and 45 to 61 (QPPP…PPPQ). The span at 83 to 95 (SVNSNAYTNGNQN) shows a compositional bias: polar residues. Residues His210 and Cys266 contribute to the active site.

The protein belongs to the peptidase C14B family.

Its function is as follows. Involved in cell death (apoptosis). The protein is Metacaspase-1 (casA) of Botryotinia fuckeliana (strain B05.10) (Noble rot fungus).